Here is a 319-residue protein sequence, read N- to C-terminus: NADH-ubiquinone oxidoreductase chain 1 (319 aa).

8 helical membrane passes run 3-23, 74-94, 106-126, 149-169, 175-195, 226-246, 254-274, and 294-314; these read LITL…AMAF, LFLL…IPLP, ILFI…SGWA, TLGL…LTTF, AVWL…STLA, LFFL…TILF, LTIN…FLWV, and FLPL…SMAG.

The protein belongs to the complex I subunit 1 family.

The protein localises to the mitochondrion inner membrane. It carries out the reaction a ubiquinone + NADH + 5 H(+)(in) = a ubiquinol + NAD(+) + 4 H(+)(out). Its function is as follows. Core subunit of the mitochondrial membrane respiratory chain NADH dehydrogenase (Complex I) that is believed to belong to the minimal assembly required for catalysis. Complex I functions in the transfer of electrons from NADH to the respiratory chain. The immediate electron acceptor for the enzyme is believed to be ubiquinone. The sequence is that of NADH-ubiquinone oxidoreductase chain 1 (MT-ND1) from Polypterus ornatipinnis (Ornate bichir).